Consider the following 558-residue polypeptide: Glucose-6-phosphate isomerase (558 aa).

Ala-2 bears the N-acetylalanine mark. At Lys-12 the chain carries N6-acetyllysine. Residues Ser-86 and Ser-107 each carry the phosphoserine modification. Residue Lys-142 is modified to N6-acetyllysine. 159-160 lines the D-glucose 6-phosphate pocket; the sequence is GS. Ser-185 carries the post-translational modification Phosphoserine; by CK2. Position 210–215 (210–215) interacts with D-glucose 6-phosphate; that stretch reads SKTFTT. At Thr-250 the chain carries Phosphothreonine. The D-glucose 6-phosphate site is built by Gln-354, Glu-358, and His-389. The Proton donor role is filled by Glu-358. His-389 is a catalytic residue. N6-acetyllysine; alternate is present on Lys-454. At Lys-454 the chain carries N6-malonyllysine; alternate. Lys-454 carries the post-translational modification N6-succinyllysine; alternate. A Phosphoserine modification is found at Ser-455. Lys-519 contributes to the D-glucose 6-phosphate binding site. The active site involves Lys-519.

It belongs to the GPI family. In terms of assembly, homodimer; in the catalytically active form. Monomer in the secreted form. Phosphorylation at Ser-185 by CK2 has been shown to decrease enzymatic activity and may contribute to secretion by a non-classical secretory pathway. Post-translationally, ISGylated.

Its subcellular location is the cytoplasm. The protein localises to the secreted. The catalysed reaction is alpha-D-glucose 6-phosphate = beta-D-fructose 6-phosphate. Its pathway is carbohydrate degradation; glycolysis; D-glyceraldehyde 3-phosphate and glycerone phosphate from D-glucose: step 2/4. Its function is as follows. In the cytoplasm, catalyzes the conversion of glucose-6-phosphate to fructose-6-phosphate, the second step in glycolysis, and the reverse reaction during gluconeogenesis. Besides it's role as a glycolytic enzyme, also acts as a secreted cytokine: acts as an angiogenic factor (AMF) that stimulates endothelial cell motility. Acts as a neurotrophic factor, neuroleukin, for spinal and sensory neurons. It is secreted by lectin-stimulated T-cells and induces immunoglobulin secretion. This Rattus norvegicus (Rat) protein is Glucose-6-phosphate isomerase.